The sequence spans 675 residues: Putative elongation factor TypA-like SVR3, chloroplastic (675 aa).

The transit peptide at 1-58 directs the protein to the chloroplast; sequence MELSLSTSSASPAVLRRQASPLLHKQQVLGVSFASALKPGGGALRFPSRRPLPRPITC. Residues 43-76 form a disordered region; that stretch reads ALRFPSRRPLPRPITCSASPSTAEPASEVKKKQL. Over residues 59–68 the composition is skewed to low complexity; that stretch reads SASPSTAEPA. The 196-residue stretch at 80–275 folds into the tr-type G domain; sequence DNVRNIAIVA…AIIRCVPGPN (196 aa).

This sequence belongs to the TRAFAC class translation factor GTPase superfamily. Classic translation factor GTPase family. BipA subfamily.

The protein localises to the plastid. Its subcellular location is the chloroplast. Its function is as follows. Putative chloroplastic elongation factor involved in response to chilling stress. Required for proper chloroplast rRNA processing and/or translation at low temperature. Involved in plastid protein homeostasis. The sequence is that of Putative elongation factor TypA-like SVR3, chloroplastic (SVR3) from Arabidopsis thaliana (Mouse-ear cress).